The following is a 156-amino-acid chain: 6,7-dimethyl-8-ribityllumazine synthase (156 aa).

Residues F23, 57 to 59 (AYE), and 81 to 83 (AII) each bind 5-amino-6-(D-ribitylamino)uracil. 86–87 (GT) is a (2S)-2-hydroxy-3-oxobutyl phosphate binding site. H89 acts as the Proton donor in catalysis. F114 serves as a coordination point for 5-amino-6-(D-ribitylamino)uracil. R128 provides a ligand contact to (2S)-2-hydroxy-3-oxobutyl phosphate.

It belongs to the DMRL synthase family.

The enzyme catalyses (2S)-2-hydroxy-3-oxobutyl phosphate + 5-amino-6-(D-ribitylamino)uracil = 6,7-dimethyl-8-(1-D-ribityl)lumazine + phosphate + 2 H2O + H(+). It functions in the pathway cofactor biosynthesis; riboflavin biosynthesis; riboflavin from 2-hydroxy-3-oxobutyl phosphate and 5-amino-6-(D-ribitylamino)uracil: step 1/2. Its function is as follows. Catalyzes the formation of 6,7-dimethyl-8-ribityllumazine by condensation of 5-amino-6-(D-ribitylamino)uracil with 3,4-dihydroxy-2-butanone 4-phosphate. This is the penultimate step in the biosynthesis of riboflavin. The protein is 6,7-dimethyl-8-ribityllumazine synthase of Helicobacter pylori (strain ATCC 700392 / 26695) (Campylobacter pylori).